The primary structure comprises 211 residues: Probable transcription repressor protein RGM1 (211 aa).

The Nuclear localization signal signature appears at 6 to 11; the sequence is PKRNKD. 2 C2H2-type zinc fingers span residues 19–44 and 50–73; these read YRCV…IRKH and FQCN…SSVH. A disordered region spans residues 178-211; sequence NIVELPPDSSDTPASPSKVQSFDQAKDASPNAKK. The span at 183–194 shows a compositional bias: low complexity; the sequence is PPDSSDTPASPS.

It is found in the nucleus. This chain is Probable transcription repressor protein RGM1 (RGM1), found in Saccharomyces cerevisiae (strain ATCC 204508 / S288c) (Baker's yeast).